The following is a 324-amino-acid chain: tRNA uridine(34) hydroxylase (324 aa).

Positions 122-218 constitute a Rhodanese domain; sequence QENRCLILDV…YGQQVGTGKW (97 aa). The active-site Cysteine persulfide intermediate is the Cys178.

It belongs to the TrhO family.

The enzyme catalyses uridine(34) in tRNA + AH2 + O2 = 5-hydroxyuridine(34) in tRNA + A + H2O. Functionally, catalyzes oxygen-dependent 5-hydroxyuridine (ho5U) modification at position 34 in tRNAs. This is tRNA uridine(34) hydroxylase from Chlamydia pneumoniae (Chlamydophila pneumoniae).